The chain runs to 47 residues: Large ribosomal subunit protein eL40 (47 aa).

This sequence belongs to the eukaryotic ribosomal protein eL40 family.

In Methanocaldococcus jannaschii (strain ATCC 43067 / DSM 2661 / JAL-1 / JCM 10045 / NBRC 100440) (Methanococcus jannaschii), this protein is Large ribosomal subunit protein eL40.